Consider the following 101-residue polypeptide: Small ribosomal subunit protein uS14 (101 aa).

Belongs to the universal ribosomal protein uS14 family. In terms of assembly, part of the 30S ribosomal subunit. Contacts proteins S3 and S10.

Functionally, binds 16S rRNA, required for the assembly of 30S particles and may also be responsible for determining the conformation of the 16S rRNA at the A site. The protein is Small ribosomal subunit protein uS14 of Burkholderia mallei (strain NCTC 10247).